Here is a 502-residue protein sequence, read N- to C-terminus: Cardiolipin synthase (502 aa).

Transmembrane regions (helical) follow at residues 7-27, 29-49, and 59-79; these read VIIFVLAVAAFLFLTNDYWEG, LLGGLSILISCSVVFIAFVIS, and ITWLVVLGSFPLIGFFFYLMF. PLD phosphodiesterase domains are found at residues 237–264 and 415–442; these read INFRNHRKIIVIDGTIGFVGGLNIGDEY and SKGFLHSKIMIVDGELASIGTANMDMRS. Residues His242, Lys244, Asp249, His420, Lys422, and Asp427 contribute to the active site.

It belongs to the phospholipase D family. Cardiolipin synthase subfamily.

The protein resides in the cell membrane. It carries out the reaction 2 a 1,2-diacyl-sn-glycero-3-phospho-(1'-sn-glycerol) = a cardiolipin + glycerol. In terms of biological role, catalyzes the reversible phosphatidyl group transfer from one phosphatidylglycerol molecule to another to form cardiolipin (CL) (diphosphatidylglycerol) and glycerol. The polypeptide is Cardiolipin synthase (cls) (Geobacillus sp. (strain WCH70)).